Reading from the N-terminus, the 2971-residue chain is Reticulocyte-binding protein homolog 1 (2971 aa).

An N-terminal signal peptide occupies residues 1–20; the sequence is MQRWIFCNIVLHILIYLAEF. Residues 21-2897 are Extracellular-facing; that stretch reads SHEQESYSSN…KKQKNGNHER (2877 aa). The tract at residues 30–50 is disordered; sequence NEKIRKDYSDDNNYEPTPSYE. Asn-70, Asn-78, Asn-87, Asn-135, Asn-286, Asn-384, and Asn-417 each carry an N-linked (GlcNAc...) asparagine glycan. The interval 500-833 is erythrocyte binding domain (EBD); it reads LQIVQQKLLE…MQQGYNNLTN (334 aa). LRR repeat units lie at residues 528–553 and 607–633; these read YKNI…NIKD and LNNL…ILQK. The N-linked (GlcNAc...) asparagine glycan is linked to Asn-685. LRR repeat units lie at residues 736–758 and 785–808; these read IDTI…VYTD and QETL…LLKE. N-linked (GlcNAc...) asparagine glycans are attached at residues Asn-830, Asn-892, Asn-1000, and Asn-1010. LRR repeat units lie at residues 993 to 1018 and 1356 to 1381; these read LKIL…TLND and LRNI…AHKE. An N-linked (GlcNAc...) asparagine glycan is attached at Asn-1425. One copy of the LRR 7 repeat lies at 1466–1489; the sequence is AKYMENIDTYKNNIEIISKQINPE. The N-linked (GlcNAc...) asparagine glycan is linked to Asn-1496. 3 LRR repeats span residues 1512 to 1537, 1586 to 1609, and 1611 to 1636; these read YKQI…ELQN, SQNI…LEEE, and EQMK…AFIN. 5 N-linked (GlcNAc...) asparagine glycosylation sites follow: Asn-1664, Asn-1692, Asn-1718, Asn-1816, and Asn-1844. LRR repeat units lie at residues 1700–1723 and 1809–1834; these read LQEL…TIKY and LKLF…SIQN. Residues 1880-1903 form an LRR 13 repeat; it reads QNEIRNMNLEKNFMLDKSKKIDEE. N-linked (GlcNAc...) asparagine glycosylation is found at Asn-1913 and Asn-1918. The stretch at 1944 to 1967 is one LRR 14 repeat; sequence KENIEKIKQEINTLSDVFKKPFFF. Asn-2054, Asn-2207, Asn-2289, Asn-2300, Asn-2338, and Asn-2405 each carry an N-linked (GlcNAc...) asparagine glycan. An LRR 15 repeat occupies 2523-2548; it reads IKDIDNVFIKIQNNKFEQIQKYIEII. 2 N-linked (GlcNAc...) asparagine glycosylation sites follow: Asn-2598 and Asn-2752. One copy of the LRR 16 repeat lies at 2731-2754; the sequence is ENIFDNIQLKKKDIDDIIININNT. Basic and acidic residues-rich tracts occupy residues 2773 to 2782 and 2795 to 2804; these read KVDEKSEINN and QKNKIKDHNL. 2 disordered regions span residues 2773-2825 and 2840-2862; these read KVDE…MKEQ and HHVH…LQEQ. An N-linked (GlcNAc...) asparagine glycan is attached at Asn-2811. Residues 2814–2825 show a composition bias toward basic and acidic residues; it reads EESHQNEQMKEQ. Residues 2898-2918 traverse the membrane as a helical segment; the sequence is MYFASGIVVSILFLSSLGFVI. The Cytoplasmic portion of the chain corresponds to 2919–2971; sequence NSKNNKQEYDKEQEKQQQNDFVCDNNKMDDKSTQKYGRNQEEVMEISFDNDYI.

May in part interact with AMA1 in the moving tight junction between the parasite and the erythrocyte membranes; the interaction may facilitate junction formation and active invasion. Proteolytically processed into multiple fragments following schizont rupture. In the mature schizont stage prior to merozoite release, full length RH1 is processed post-Golgi into a 240 kDa N-terminal form and a 120 kDa C-terminal form containing the transmembrane region. Both forms appear not to form a complex. However, they appear to remain in close proximity in late schizonts. Following merozoite invasion of host erythrocytes, the 240 kDa form is further processed into a 140 kDa form which may be involved in the disengagement of the ligand-receptor complex required during the invasion process. Also, the 120 kDa is further cleaved into a 110 kDa form and a transmembrane 9 kDa form probably by ROM4.

Its subcellular location is the cell membrane. It is found in the secreted. It localises to the cell junction. The protein localises to the tight junction. The protein resides in the cytoplasmic vesicle. Its subcellular location is the secretory vesicle. It is found in the rhoptry. During the asexual blood stage, binds to a sialic acid containing receptor on the surface of the host erythrocyte and thus is involved in merozoite invasion. Binds erythrocytes via a neuraminidase sensitive and trypsin-, chymotrypsin-resistant receptor. After merozoite attachment and reorientation, RH1 binding to its erythrocyte receptor triggers an increase in intracellular Ca(2+) within the parasite resulting in the release of microneme proteins such as EBA175 which in turn leads to the formation of the tight junction between parasite and host cell. This Plasmodium falciparum (isolate 3D7) protein is Reticulocyte-binding protein homolog 1.